A 321-amino-acid chain; its full sequence is Quinol oxidase subunit 2 (321 aa).

A signal peptide spans 1–25; sequence MIFLFRALKPLLVLALLTVVFVLGG. Residue Cys26 is the site of N-palmitoyl cysteine attachment. The S-diacylglycerol cysteine moiety is linked to residue Cys26. 2 helical membrane passes run 49–69 and 90–110; these read SIGF…IILV and TFLE…LSVP. A disordered region spans residues 294–321; sequence QAVSPHSKTDPFENVKKNEFKKSDDTEE. The span at 300-321 shows a compositional bias: basic and acidic residues; that stretch reads SKTDPFENVKKNEFKKSDDTEE.

It belongs to the cytochrome c oxidase subunit 2 family. Interacts with FloT.

The protein localises to the cell membrane. It localises to the membrane raft. The enzyme catalyses 2 a quinol + O2 = 2 a quinone + 2 H2O. Functionally, catalyzes quinol oxidation with the concomitant reduction of oxygen to water. Major component for energy conversion during vegetative growth. Subunit II transfers the electrons from a quinol to the binuclear center of the catalytic subunit I. The protein is Quinol oxidase subunit 2 (qoxA) of Bacillus subtilis (strain 168).